The primary structure comprises 296 residues: Lipoyl synthase (296 aa).

[4Fe-4S] cluster contacts are provided by Cys38, Cys43, Cys49, Cys64, Cys68, Cys71, and Ser279. Residues 50–268 enclose the Radical SAM core domain; the sequence is WDGGCLTFMV…AEYGRSLGFK (219 aa).

This sequence belongs to the radical SAM superfamily. Lipoyl synthase family. [4Fe-4S] cluster serves as cofactor.

The protein localises to the cytoplasm. It carries out the reaction [[Fe-S] cluster scaffold protein carrying a second [4Fe-4S](2+) cluster] + N(6)-octanoyl-L-lysyl-[protein] + 2 oxidized [2Fe-2S]-[ferredoxin] + 2 S-adenosyl-L-methionine + 4 H(+) = [[Fe-S] cluster scaffold protein] + N(6)-[(R)-dihydrolipoyl]-L-lysyl-[protein] + 4 Fe(3+) + 2 hydrogen sulfide + 2 5'-deoxyadenosine + 2 L-methionine + 2 reduced [2Fe-2S]-[ferredoxin]. It participates in protein modification; protein lipoylation via endogenous pathway; protein N(6)-(lipoyl)lysine from octanoyl-[acyl-carrier-protein]: step 2/2. In terms of biological role, catalyzes the radical-mediated insertion of two sulfur atoms into the C-6 and C-8 positions of the octanoyl moiety bound to the lipoyl domains of lipoate-dependent enzymes, thereby converting the octanoylated domains into lipoylated derivatives. The chain is Lipoyl synthase from Methanocella arvoryzae (strain DSM 22066 / NBRC 105507 / MRE50).